The sequence spans 126 residues: MADMAKFEEEVNKLRTLEKDREKYFTSRQEMEMRLTESKNVKAELDLMESDSKVYKLIGAVLVRQDLEEARSTVEKRLEFIDSETKRVEASISDISKKCTEQRDKVMNMQKSFQMMAQAAAQAQKK.

This sequence belongs to the prefoldin subunit beta family. In terms of assembly, heterohexamer of two PFD-alpha type and four PFD-beta type subunits. Expressed in embryonic blastomeres and gonads.

It localises to the cytoplasm. In terms of biological role, binds specifically to cytosolic chaperonin (c-CPN) and transfers target proteins to it. Binds to nascent polypeptide chain and promotes folding in an environment in which there are many competing pathways for nonnative proteins. Required for positioning of the mitotic spindle. The protein is Probable prefoldin subunit 6 (pfd-6) of Caenorhabditis elegans.